A 118-amino-acid chain; its full sequence is Large ribosomal subunit protein uL18 (118 aa).

This sequence belongs to the universal ribosomal protein uL18 family. As to quaternary structure, part of the 50S ribosomal subunit; part of the 5S rRNA/L5/L18/L25 subcomplex. Contacts the 5S and 23S rRNAs.

Its function is as follows. This is one of the proteins that bind and probably mediate the attachment of the 5S RNA into the large ribosomal subunit, where it forms part of the central protuberance. This Acidobacterium capsulatum (strain ATCC 51196 / DSM 11244 / BCRC 80197 / JCM 7670 / NBRC 15755 / NCIMB 13165 / 161) protein is Large ribosomal subunit protein uL18.